Consider the following 177-residue polypeptide: ATP synthase subunit delta (177 aa).

It belongs to the ATPase delta chain family. F-type ATPases have 2 components, F(1) - the catalytic core - and F(0) - the membrane proton channel. F(1) has five subunits: alpha(3), beta(3), gamma(1), delta(1), epsilon(1). F(0) has three main subunits: a(1), b(2) and c(10-14). The alpha and beta chains form an alternating ring which encloses part of the gamma chain. F(1) is attached to F(0) by a central stalk formed by the gamma and epsilon chains, while a peripheral stalk is formed by the delta and b chains.

It is found in the cell inner membrane. F(1)F(0) ATP synthase produces ATP from ADP in the presence of a proton or sodium gradient. F-type ATPases consist of two structural domains, F(1) containing the extramembraneous catalytic core and F(0) containing the membrane proton channel, linked together by a central stalk and a peripheral stalk. During catalysis, ATP synthesis in the catalytic domain of F(1) is coupled via a rotary mechanism of the central stalk subunits to proton translocation. Functionally, this protein is part of the stalk that links CF(0) to CF(1). It either transmits conformational changes from CF(0) to CF(1) or is implicated in proton conduction. The chain is ATP synthase subunit delta from Haemophilus ducreyi (strain 35000HP / ATCC 700724).